Here is a 112-residue protein sequence, read N- to C-terminus: Histone H3-4 (112 aa).

The interval 1-31 (QTGAKAPRKALANKAARKTAPADGGVKKPHR) is disordered.

Belongs to the histone H3 family. In terms of assembly, the nucleosome is a histone octamer containing two molecules each of H2A, H2B, H3 and H4 assembled in one H3-H4 heterotetramer and two H2A-H2B heterodimers. The octamer wraps approximately 147 bp of DNA.

Its subcellular location is the nucleus. It localises to the chromosome. Functionally, core component of nucleosome. Nucleosomes wrap and compact DNA into chromatin, limiting DNA accessibility to the cellular machineries which require DNA as a template. Histones thereby play a central role in transcription regulation, DNA repair, DNA replication and chromosomal stability. DNA accessibility is regulated via a complex set of post-translational modifications of histones, also called histone code, and nucleosome remodeling. In Stylonychia lemnae (Ciliate), this protein is Histone H3-4 (H3-4).